Consider the following 234-residue polypeptide: Glucosamine-6-phosphate deaminase (234 aa).

Asp62 acts as the Proton acceptor; for enolization step in catalysis. Asn128 serves as the catalytic For ring-opening step. The active-site Proton acceptor; for ring-opening step is the His130. The active-site For ring-opening step is the Glu135.

The protein belongs to the glucosamine/galactosamine-6-phosphate isomerase family. NagB subfamily.

It carries out the reaction alpha-D-glucosamine 6-phosphate + H2O = beta-D-fructose 6-phosphate + NH4(+). Its pathway is amino-sugar metabolism; N-acetylneuraminate degradation; D-fructose 6-phosphate from N-acetylneuraminate: step 5/5. Its function is as follows. Catalyzes the reversible isomerization-deamination of glucosamine 6-phosphate (GlcN6P) to form fructose 6-phosphate (Fru6P) and ammonium ion. This chain is Glucosamine-6-phosphate deaminase, found in Streptococcus suis (strain 98HAH33).